Reading from the N-terminus, the 434-residue chain is Nicotinate phosphoribosyltransferase (434 aa).

Phosphohistidine; by autocatalysis is present on His-242.

The protein belongs to the NAPRTase family. Transiently phosphorylated on a His residue during the reaction cycle. Phosphorylation strongly increases the affinity for substrates and increases the rate of nicotinate D-ribonucleotide production. Dephosphorylation regenerates the low-affinity form of the enzyme, leading to product release.

It catalyses the reaction nicotinate + 5-phospho-alpha-D-ribose 1-diphosphate + ATP + H2O = nicotinate beta-D-ribonucleotide + ADP + phosphate + diphosphate. It functions in the pathway cofactor biosynthesis; NAD(+) biosynthesis; nicotinate D-ribonucleotide from nicotinate: step 1/1. Its function is as follows. Catalyzes the synthesis of beta-nicotinate D-ribonucleotide from nicotinate and 5-phospho-D-ribose 1-phosphate at the expense of ATP. The chain is Nicotinate phosphoribosyltransferase from Rhizobium leguminosarum bv. trifolii (strain WSM2304).